The sequence spans 127 residues: Protein LLP homolog (127 aa).

The span at 1 to 21 shows a compositional bias: basic residues; sequence MAKSLRSKWKRKMRAEKRKKN. The segment at 1–24 is disordered; sequence MAKSLRSKWKRKMRAEKRKKNAPK. Residues lysine 65 and lysine 72 each participate in a glycyl lysine isopeptide (Lys-Gly) (interchain with G-Cter in SUMO2) cross-link. Basic residues predominate over residues 98–120; sequence RQRKRLKAKRERKKGKSKVKAMK. The segment at 98–127 is disordered; that stretch reads RQRKRLKAKRERKKGKSKVKAMKAAKGLTW.

This sequence belongs to the learning-associated protein family. Interacts with CTCF, MYO1C and with the transcriptional machinery, including RNA polymerase II and TBP.

The protein resides in the nucleus. It localises to the nucleolus. The protein localises to the chromosome. In terms of biological role, in hippocampal neurons, regulates dendritic and spine growth and synaptic transmission. The polypeptide is Protein LLP homolog (LLPH) (Bos taurus (Bovine)).